Here is a 241-residue protein sequence, read N- to C-terminus: Ribonuclease PH (241 aa).

Phosphate contacts are provided by residues Arg-89 and 127–129 (GTR).

The protein belongs to the RNase PH family. Homohexameric ring arranged as a trimer of dimers.

It catalyses the reaction tRNA(n+1) + phosphate = tRNA(n) + a ribonucleoside 5'-diphosphate. Its function is as follows. Phosphorolytic 3'-5' exoribonuclease that plays an important role in tRNA 3'-end maturation. Removes nucleotide residues following the 3'-CCA terminus of tRNAs; can also add nucleotides to the ends of RNA molecules by using nucleoside diphosphates as substrates, but this may not be physiologically important. Probably plays a role in initiation of 16S rRNA degradation (leading to ribosome degradation) during starvation. The polypeptide is Ribonuclease PH (Xanthomonas axonopodis pv. citri (strain 306)).